Reading from the N-terminus, the 321-residue chain is Lipoyl synthase (321 aa).

7 residues coordinate [4Fe-4S] cluster: Cys-68, Cys-73, Cys-79, Cys-94, Cys-98, Cys-101, and Ser-308. One can recognise a Radical SAM core domain in the interval 80–297; the sequence is FNHGTATFMI…KEIALELGFT (218 aa).

It belongs to the radical SAM superfamily. Lipoyl synthase family. [4Fe-4S] cluster is required as a cofactor.

It localises to the cytoplasm. It catalyses the reaction [[Fe-S] cluster scaffold protein carrying a second [4Fe-4S](2+) cluster] + N(6)-octanoyl-L-lysyl-[protein] + 2 oxidized [2Fe-2S]-[ferredoxin] + 2 S-adenosyl-L-methionine + 4 H(+) = [[Fe-S] cluster scaffold protein] + N(6)-[(R)-dihydrolipoyl]-L-lysyl-[protein] + 4 Fe(3+) + 2 hydrogen sulfide + 2 5'-deoxyadenosine + 2 L-methionine + 2 reduced [2Fe-2S]-[ferredoxin]. It participates in protein modification; protein lipoylation via endogenous pathway; protein N(6)-(lipoyl)lysine from octanoyl-[acyl-carrier-protein]: step 2/2. Its function is as follows. Catalyzes the radical-mediated insertion of two sulfur atoms into the C-6 and C-8 positions of the octanoyl moiety bound to the lipoyl domains of lipoate-dependent enzymes, thereby converting the octanoylated domains into lipoylated derivatives. The polypeptide is Lipoyl synthase (Aliivibrio fischeri (strain ATCC 700601 / ES114) (Vibrio fischeri)).